An 87-amino-acid chain; its full sequence is U14-lycotoxin-Ls1a (87 aa).

The first 20 residues, 1-20 (MNSKVFAVLLLLALSTCVLS), serve as a signal peptide directing secretion. A WAP domain is found at 21–66 (EKYCPTPRNTSCKKMNIRNNCCRDSDCTSNAFCCAEPCGNFCHKAS). Intrachain disulfides connect Cys-24–Cys-54, Cys-32–Cys-58, Cys-41–Cys-53, Cys-42–Cys-80, and Cys-47–Cys-62.

It belongs to the venom protein 11 family. 01 (wap-1) subfamily. In terms of processing, contains 5 disulfide bonds. Expressed by the venom gland.

It localises to the secreted. In terms of biological role, has antibacterial activity. This is U14-lycotoxin-Ls1a from Lycosa singoriensis (Wolf spider).